Reading from the N-terminus, the 613-residue chain is Dihydroxy-acid dehydratase (613 aa).

Aspartate 81 provides a ligand contact to Mg(2+). [2Fe-2S] cluster is bound at residue cysteine 122. 2 residues coordinate Mg(2+): aspartate 123 and lysine 124. Lysine 124 carries the post-translational modification N6-carboxylysine. [2Fe-2S] cluster is bound at residue cysteine 193. Residue glutamate 489 participates in Mg(2+) binding. Residue serine 515 is the Proton acceptor of the active site.

Belongs to the IlvD/Edd family. Homodimer. [2Fe-2S] cluster is required as a cofactor. Mg(2+) serves as cofactor.

The enzyme catalyses (2R)-2,3-dihydroxy-3-methylbutanoate = 3-methyl-2-oxobutanoate + H2O. It carries out the reaction (2R,3R)-2,3-dihydroxy-3-methylpentanoate = (S)-3-methyl-2-oxopentanoate + H2O. The protein operates within amino-acid biosynthesis; L-isoleucine biosynthesis; L-isoleucine from 2-oxobutanoate: step 3/4. It participates in amino-acid biosynthesis; L-valine biosynthesis; L-valine from pyruvate: step 3/4. Its function is as follows. Functions in the biosynthesis of branched-chain amino acids. Catalyzes the dehydration of (2R,3R)-2,3-dihydroxy-3-methylpentanoate (2,3-dihydroxy-3-methylvalerate) into 2-oxo-3-methylpentanoate (2-oxo-3-methylvalerate) and of (2R)-2,3-dihydroxy-3-methylbutanoate (2,3-dihydroxyisovalerate) into 2-oxo-3-methylbutanoate (2-oxoisovalerate), the penultimate precursor to L-isoleucine and L-valine, respectively. This chain is Dihydroxy-acid dehydratase, found in Pseudomonas putida (strain GB-1).